Consider the following 736-residue polypeptide: Melanotransferrin (736 aa).

The N-terminal stretch at 1–19 (MRCRSAAMWIFLALRTALG) is a signal peptide. Transferrin-like domains are found at residues 23–357 (VRWC…GLLC) and 366–706 (LRWC…GMQS). 2 cysteine pairs are disulfide-bonded: C26-C63 and C36-C54. 2 residues coordinate Fe(3+): D78 and Y107. N118 carries an N-linked (GlcNAc...) asparagine glycan. 4 disulfide bridges follow: C130–C216, C172–C189, C186–C199, and C257–C271. T132 contacts hydrogencarbonate. Residue N135 is glycosylated (N-linked (GlcNAc...) asparagine). Hydrogencarbonate is bound by residues R136, V138, and G139. Y210 contributes to the Fe(3+) binding site. Residues H279 and Y451 each coordinate Fe(3+). Residue N515 is glycosylated (N-linked (GlcNAc...) asparagine). H625 lines the Fe(3+) pocket. G711 is lipidated: GPI-anchor amidated glycine. Positions 712–736 (AAVGAPGASLLPLLPLAVGLLLSSL) are cleaved as a propeptide — removed in mature form.

It belongs to the transferrin family.

It is found in the cell membrane. Its function is as follows. Involved in iron cellular uptake. Seems to be internalized and then recycled back to the cell membrane. Binds a single atom of iron per subunit. Could also bind zinc. This chain is Melanotransferrin, found in Oryctolagus cuniculus (Rabbit).